Consider the following 190-residue polypeptide: DNA dC-&gt;dU-editing enzyme APOBEC-3C (190 aa).

Residues 29–138 (DRNETWLCFT…TDYQEGLRSL (110 aa)) form the CMP/dCMP-type deaminase domain. Residues histidine 66, cysteine 97, and cysteine 100 each contribute to the Zn(2+) site.

It belongs to the cytidine and deoxycytidylate deaminase family. In terms of assembly, homodimer. Interacts with TRIB3. Zn(2+) serves as cofactor.

It is found in the nucleus. It localises to the cytoplasm. It carries out the reaction a 2'-deoxycytidine in single-stranded DNA + H2O + H(+) = a 2'-deoxyuridine in single-stranded DNA + NH4(+). In terms of biological role, DNA deaminase (cytidine deaminase) which acts as an inhibitor of retrovirus replication and retrotransposon mobility via deaminase-dependent and -independent mechanisms. May also play a role in the epigenetic regulation of gene expression through the process of active DNA demethylation. The sequence is that of DNA dC-&gt;dU-editing enzyme APOBEC-3C (APOBEC3C) from Gorilla gorilla gorilla (Western lowland gorilla).